The chain runs to 3414 residues: Genome polyprotein (3414 aa).

The segment at 1–30 (MVKKAILKGKGGGPPRRVSKETATKTRQPR) is disordered. At 2-98 (VKKAILKGKG…LQKRGKRRSA (97 aa)) the chain is on the cytoplasmic side. Residues 97–117 (SATDWMSWLLVITLLGMTLAA) constitute a propeptide, ER anchor for the capsid protein C, removed in mature form by serine protease NS3. Residues 99-119 (TDWMSWLLVITLLGMTLAATV) traverse the membrane as a helical segment. Residues 120-242 (RKERDGSTVI…HLTRVEGWVW (123 aa)) lie on the Extracellular side of the membrane. Asparagine 144 is a glycosylation site (N-linked (GlcNAc...) asparagine; by host). The helical transmembrane segment at 243–260 (KNKLLALAMVTVVWLTLE) threads the bilayer. A topological domain (cytoplasmic) is located at residue serine 261. A helical transmembrane segment spans residues 262 to 280 (VVTRVAVLVVLLCLAPVYA). Residues 281 to 727 (SRCTHLENRD…HTVLGGAFNS (447 aa)) are Extracellular-facing. 6 cysteine pairs are disulfide-bonded: cysteine 283-cysteine 310, cysteine 340-cysteine 396, cysteine 340-cysteine 401, cysteine 354-cysteine 385, cysteine 372-cysteine 396, and cysteine 372-cysteine 401. Positions 378–391 (DRGWGNHCGLFGKG) are fusion peptide. N-linked (GlcNAc...) asparagine; by host glycosylation is present at asparagine 434. Disulfide bonds link cysteine 466/cysteine 570 and cysteine 587/cysteine 618. A helical membrane pass occupies residues 728–748 (IFGGVGFLPKLLLGVALAWLG). At 749–755 (LNMRNPT) the chain is on the extracellular side. Residues 756-776 (MSMSFLLAGGLVLAMTLGVGA) traverse the membrane as a helical segment. Over 777–1132 (DVGCAVDTER…RSMVVADNGE (356 aa)) the chain is Extracellular. Intrachain disulfides connect cysteine 780-cysteine 791, cysteine 831-cysteine 920, cysteine 955-cysteine 1000, cysteine 1057-cysteine 1106, cysteine 1068-cysteine 1090, and cysteine 1089-cysteine 1093. 3 N-linked (GlcNAc...) asparagine; by host glycosylation sites follow: asparagine 861, asparagine 983, and asparagine 999. A helical membrane pass occupies residues 1133 to 1153 (LLSEGGVPGIVALFVVLEYII). The Cytoplasmic segment spans residues 1154–1158 (RRRPS). A helical transmembrane segment spans residues 1159 to 1179 (TGTTVVWGGIVVLALLVTGMV). Topologically, residues 1180-1187 (RIESLVRY) are lumenal. The chain crosses the membrane as a helical span at residues 1188–1208 (VVAVGITFHLELGPEIVALML). The Cytoplasmic segment spans residues 1209 to 1293 (LQAVFELRVG…LLMALMTQQD (85 aa)). The helical transmembrane segment at 1294 to 1314 (VVTVHHGLVCFLSVASACSVW) threads the bilayer. The Lumenal segment spans residues 1315-1327 (RLLKGHREQKGLT). The chain crosses the membrane as a helical span at residues 1328–1348 (WVVPLAGLLGGEGSGIRLLAF). Topologically, residues 1349–1359 (WELSAHRGRRS) are cytoplasmic. Residues 1360-1378 (FSEPLTVVGVMLTLASGMM) traverse the membrane as a helical segment. Residues 1379–1382 (RHTS) are Lumenal-facing. A helical membrane pass occupies residues 1383–1403 (QEALCALAVASFLLLMLVLGT). Topologically, residues 1404–1454 (RKMQLVAEWSGCVEWYPELVNEGGEVSLRVRQDAMGNFHLTELEKEERMMA) are cytoplasmic. The tract at residues 1410–1449 (AEWSGCVEWYPELVNEGGEVSLRVRQDAMGNFHLTELEKE) is interacts with and activates NS3 protease. Positions 1455-1475 (FWLIAGLAASAIHWSGILGVM) form an intramembrane region, helical. Over 1476-2160 (GLWTLTEMLR…RMAERDAPEA (685 aa)) the chain is Cytoplasmic. Residues 1490–1669 (SDLVFSGQGG…EAEKSRPNLP (180 aa)) form the Peptidase S7 domain. Active-site charge relay system; for serine protease NS3 activity residues include histidine 1543, aspartate 1567, and serine 1627. One can recognise a Helicase ATP-binding domain in the interval 1675–1831 (TGWTSKGQIT…ESNGAITSEE (157 aa)). 1688–1695 (MHPGSGKT) lines the ATP pocket. A DEAH box motif is present at residues 1779-1782 (DEAH). Residues 1841-2000 (DGFDWITEYE…TLRGPVATFY (160 aa)) form the Helicase C-terminal domain. Lysine 1883 is modified (N6-acetyllysine; by host). Residues 2161–2181 (FLTMVEMMVLGLATLGVIWCF) form a helical membrane-spanning segment. At 2182 to 2189 (VVRTSISR) the chain is on the lumenal side. Positions 2190–2210 (MMLGTLVLLASLLLLWAGGVG) form an intramembrane region, helical. Position 2211 (tyrosine 2211) is a topological domain, lumenal. The chain crosses the membrane as a helical span at residues 2212-2232 (GNMAGVALIFYTLLTVLQPEA). Residues 2233–2244 (GKQRSSDDNKLA) lie on the Cytoplasmic side of the membrane. Residues 2245–2265 (YFLLTLCSLAGLVAANEMGFL) traverse the membrane as a helical segment. Residues 2266-2299 (EKTKADLSTALWSEREEPRPWSEWTNVDIQPARS) are Lumenal-facing. Residues 2300–2320 (WGTYVLVVSLFTPYIIHQLQT) constitute an intramembrane region (helical). Residues 2321–2343 (KIQQLVNSAVASGAQAMRDLGGG) are Lumenal-facing. The helical intramembrane region spans 2344-2364 (APFFGVAGHVMTLGVVSLIGA). Topologically, residues 2365 to 2368 (TPTS) are lumenal. The chain crosses the membrane as a helical span at residues 2369-2389 (LMVGVGLAALHLAIVVSGLEA). The Cytoplasmic portion of the chain corresponds to 2390–2432 (ELTQRAHKVFFSAMVRNPMVDGDVINPFGEGEAKPALYERKMS). The helical transmembrane segment at 2433-2453 (LVLATVLCLMSVVMNRTVASI) threads the bilayer. The Lumenal segment spans residues 2454–2477 (TEASAVGLAAAGQLLRPEADTLWT). A helical transmembrane segment spans residues 2478-2498 (MPVACGMSGVVRGSLWGFLPL). At 2499-3414 (GHRLWLRASG…WELRLESSII (916 aa)) the chain is on the cytoplasmic side. Residues 2512–2776 (GGSEGDTLGD…ELDLGVGTRC (265 aa)) enclose the mRNA cap 0-1 NS5-type MT domain. Serine 2567 serves as a coordination point for S-adenosyl-L-methionine. A Phosphoserine modification is found at serine 2567. Lysine 2572 (for 2'-O-MTase activity) is an active-site residue. Positions 2597, 2598, 2615, 2616, 2642, and 2643 each coordinate S-adenosyl-L-methionine. Aspartate 2657 (for 2'-O-MTase activity) is an active-site residue. Isoleucine 2658 lines the S-adenosyl-L-methionine pocket. Catalysis depends on for 2'-O-MTase activity residues lysine 2694 and glutamate 2730. Positions 2730-2734 (EMYYS) are interaction with host SCRIB. Tyrosine 2732 lines the S-adenosyl-L-methionine pocket. Zn(2+) contacts are provided by glutamate 2950, histidine 2954, cysteine 2959, and cysteine 2962. One can recognise a RdRp catalytic domain in the interval 3040–3189 (GLFYADDTAG…RPLDDRFGKA (150 aa)). Residues histidine 3224, cysteine 3240, and cysteine 3359 each coordinate Zn(2+).

The protein in the N-terminal section; belongs to the class I-like SAM-binding methyltransferase superfamily. mRNA cap 0-1 NS5-type methyltransferase family. Homodimer. Interacts (via N-terminus) with host EXOC1 (via C-terminus); this interaction results in EXOC1 degradation through the proteasome degradation pathway. In terms of assembly, forms heterodimers with envelope protein E in the endoplasmic reticulum and Golgi. As to quaternary structure, homodimer; in the endoplasmic reticulum and Golgi. Interacts with protein prM. Interacts with non-structural protein 1. Homodimer; Homohexamer when secreted. Interacts with envelope protein E. In terms of assembly, interacts (via N-terminus) with serine protease NS3. As to quaternary structure, forms a heterodimer with serine protease NS3. May form homooligomers. Forms a heterodimer with NS2B. Interacts with NS4B. Interacts with unphosphorylated RNA-directed RNA polymerase NS5; this interaction stimulates RNA-directed RNA polymerase NS5 guanylyltransferase activity. In terms of assembly, interacts with serine protease NS3. Interacts with NS1. As to quaternary structure, homodimer. Interacts with host STAT2; this interaction inhibits the phosphorylation of the latter, and, when all viral proteins are present (polyprotein), targets STAT2 for degradation. Interacts with serine protease NS3. Interacts with host SCRIB; this interaction targets NS5 to the cell membrane periphery and nucleus, thereby allowing efficient host nuclear STAT1 inhibition. Specific enzymatic cleavages in vivo yield mature proteins. Cleavages in the lumen of endoplasmic reticulum are performed by host signal peptidase, whereas cleavages in the cytoplasmic side are performed by serine protease NS3. Signal cleavage at the 2K-4B site requires a prior NS3 protease-mediated cleavage at the 4A-2K site. In terms of processing, cleaved in post-Golgi vesicles by a host furin, releasing the mature small envelope protein M, and peptide pr. This cleavage is incomplete as up to 30% of viral particles still carry uncleaved prM. Post-translationally, N-glycosylated. N-glycosylated. The excreted form is glycosylated and this is required for efficient secretion of the protein from infected cells. In terms of processing, acetylated by host KAT5. Acetylation modulates NS3 RNA-binding and unwinding activities and plays an important positive role for viral replication. Post-translationally, phosphorylated on serines residues. This phosphorylation may trigger NS5 nuclear localization.

It localises to the virion. Its subcellular location is the host nucleus. The protein localises to the host cytoplasm. The protein resides in the host perinuclear region. It is found in the secreted. It localises to the virion membrane. Its subcellular location is the host endoplasmic reticulum membrane. It carries out the reaction Selective hydrolysis of -Xaa-Xaa-|-Yaa- bonds in which each of the Xaa can be either Arg or Lys and Yaa can be either Ser or Ala.. It catalyses the reaction RNA(n) + a ribonucleoside 5'-triphosphate = RNA(n+1) + diphosphate. The catalysed reaction is a ribonucleoside 5'-triphosphate + H2O = a ribonucleoside 5'-diphosphate + phosphate + H(+). The enzyme catalyses ATP + H2O = ADP + phosphate + H(+). It carries out the reaction a 5'-end (5'-triphosphoguanosine)-ribonucleoside in mRNA + S-adenosyl-L-methionine = a 5'-end (N(7)-methyl 5'-triphosphoguanosine)-ribonucleoside in mRNA + S-adenosyl-L-homocysteine. It catalyses the reaction a 5'-end (N(7)-methyl 5'-triphosphoguanosine)-ribonucleoside in mRNA + S-adenosyl-L-methionine = a 5'-end (N(7)-methyl 5'-triphosphoguanosine)-(2'-O-methyl-ribonucleoside) in mRNA + S-adenosyl-L-homocysteine + H(+). In terms of biological role, plays a role in virus budding by binding to the cell membrane and gathering the viral RNA into a nucleocapsid that forms the core of a mature virus particle. During virus entry, may induce genome penetration into the host cytoplasm after hemifusion induced by the surface proteins. Can migrate to the cell nucleus where it modulates host functions. Inhibits RNA silencing by interfering with host Dicer. Its function is as follows. Prevents premature fusion activity of envelope proteins in trans-Golgi by binding to envelope protein E at pH6.0. After virion release in extracellular space, gets dissociated from E dimers. Functionally, acts as a chaperone for envelope protein E during intracellular virion assembly by masking and inactivating envelope protein E fusion peptide. prM is the only viral peptide matured by host furin in the trans-Golgi network probably to avoid catastrophic activation of the viral fusion activity in acidic Golgi compartment prior to virion release. prM-E cleavage is inefficient, and many virions are only partially matured. These uncleaved prM would play a role in immune evasion. In terms of biological role, may play a role in virus budding. Exerts cytotoxic effects by activating a mitochondrial apoptotic pathway through M ectodomain. May display a viroporin activity. Binds to host cell surface receptor and mediates fusion between viral and cellular membranes. Envelope protein is synthesized in the endoplasmic reticulum in the form of heterodimer with protein prM. They play a role in virion budding in the ER, and the newly formed immature particle is covered with 60 spikes composed of heterodimer between precursor prM and envelope protein E. The virion is transported to the Golgi apparatus where the low pH causes dissociation of PrM-E heterodimers and formation of E homodimers. prM-E cleavage is inefficient, and many virions are only partially matured. These uncleaved prM would play a role in immune evasion. Its function is as follows. Involved in immune evasion, pathogenesis and viral replication. Once cleaved off the polyprotein, is targeted to three destinations: the viral replication cycle, the plasma membrane and the extracellular compartment. Essential for viral replication. Required for formation of the replication complex and recruitment of other non-structural proteins to the ER-derived membrane structures. Excreted as a hexameric lipoparticle that plays a role against host immune response. Antagonizing the complement function. Binds to the host macrophages and dendritic cells. Inhibits signal transduction originating from Toll-like receptor 3 (TLR3). Functionally, component of the viral RNA replication complex that functions in virion assembly and antagonizes the host immune response. In terms of biological role, required cofactor for the serine protease function of NS3. May have membrane-destabilizing activity and form viroporins. Displays three enzymatic activities: serine protease, NTPase and RNA helicase. NS3 serine protease, in association with NS2B, performs its autocleavage and cleaves the polyprotein at dibasic sites in the cytoplasm: C-prM, NS2A-NS2B, NS2B-NS3, NS3-NS4A, NS4A-2K and NS4B-NS5. NS3 RNA helicase binds RNA and unwinds dsRNA in the 3' to 5' direction. Its function is as follows. Regulates the ATPase activity of the NS3 helicase activity. NS4A allows NS3 helicase to conserve energy during unwinding. Functionally, functions as a signal peptide for NS4B and is required for the interferon antagonism activity of the latter. In terms of biological role, induces the formation of ER-derived membrane vesicles where the viral replication takes place. Inhibits interferon (IFN)-induced host STAT1 phosphorylation and nuclear translocation, thereby preventing the establishment of cellular antiviral state by blocking the IFN-alpha/beta pathway. Inhibits STAT2 translocation in the nucleus after IFN-alpha treatment. Replicates the viral (+) and (-) genome, and performs the capping of genomes in the cytoplasm. NS5 methylates viral RNA cap at guanine N-7 and ribose 2'-O positions. Besides its role in RNA genome replication, also prevents the establishment of cellular antiviral state by blocking the interferon-alpha/beta (IFN-alpha/beta) signaling pathway. Inhibits host TYK2 and STAT2 phosphorylation, thereby preventing activation of JAK-STAT signaling pathway. The protein is Genome polyprotein of Tick-borne encephalitis virus European subtype (strain Neudoerfl) (NEUV).